Here is a 242-residue protein sequence, read N- to C-terminus: Lysosomal membrane ascorbate-dependent ferrireductase CYB561A3 (242 aa).

Topologically, residues 1-4 are cytoplasmic; sequence MASG. The chain crosses the membrane as a helical span at residues 5–25; it reads WFYLSCMVLGSLGSMCILFTA. Positions 12–219 constitute a Cytochrome b561 domain; the sequence is VLGSLGSMCI…FGLLVLYVLL (208 aa). At 26-40 the chain is on the lumenal side; it reads YWMQYWRGGFAWDGT. Residues 41 to 61 traverse the membrane as a helical segment; sequence VLMFNWHPVLMVAGMVVLYGA. Positions 47 and 67 each coordinate heme b. Over 62-81 the chain is Cytoplasmic; sequence ASLVYRLPSSWVGPRLPWKV. L-ascorbate-binding residues include arginine 76 and lysine 80. A helical transmembrane segment spans residues 82-102; sequence LHAALHLLAFTCTVVGLIAVF. Heme b-binding positions include histidine 83, 112–115, and histidine 117; that span reads HLYS. The Lumenal segment spans residues 103–119; that stretch reads RFHNHSRIAHLYSLHSW. The chain crosses the membrane as a helical span at residues 120-140; that stretch reads LGITTVVLFACQWFLGFAVFL. The Cytoplasmic segment spans residues 141–154; that stretch reads LPWASQWLRSLLKP. Arginine 149 lines the L-ascorbate pocket. A helical transmembrane segment spans residues 155 to 175; the sequence is LHVFFGACILSLSITSVISGI. Heme b-binding residues include histidine 156 and glutamate 177. Over 176-202 the chain is Lumenal; the sequence is NEKLFFVLKNATKPYSSLPGEAVFANS. Residues 203 to 223 form a helical membrane-spanning segment; the sequence is TGLLVVAFGLLVLYVLLASSW. Lysine 224 contacts heme b. Topologically, residues 224 to 242 are cytoplasmic; the sequence is KRPDPGALTDRQPLLHDRE.

Homodimer. It depends on heme b as a cofactor. In terms of processing, N-glycosylated. As to expression, present in lung, spleen, thymus and testis. Present at low level in brain, heart, liver and kidney. Expressed in the alveolar macrophages of the lung, in the white pulp of the spleen, widespread in the thymus, and in the Sertoli cells of the testis (at protein level).

It localises to the late endosome membrane. It is found in the lysosome membrane. The catalysed reaction is Fe(3+)(out) + L-ascorbate(in) = monodehydro-L-ascorbate radical(in) + Fe(2+)(out) + H(+). Its function is as follows. Transmembrane reductase that uses ascorbate as an electron donor in the cytoplasm and transfers electrons across membranes to reduce iron cations Fe(3+) into Fe(2+) in the lumen of the late endosome and lysosome. Reduced iron can then be extruded from the late endosome and lysosome to the cytoplasm by divalent metal-specific transporters. It is therefore most probably involved in endosomal and lysosomal cellular iron homeostasis. This Mus musculus (Mouse) protein is Lysosomal membrane ascorbate-dependent ferrireductase CYB561A3.